Consider the following 444-residue polypeptide: Tubulin beta-4 chain (444 aa).

The GTP site is built by Gln11, Glu69, Ser138, Gly142, Thr143, Gly144, Asn204, and Asn226. Glu69 serves as a coordination point for Mg(2+).

Belongs to the tubulin family. As to quaternary structure, dimer of alpha and beta chains. A typical microtubule is a hollow water-filled tube with an outer diameter of 25 nm and an inner diameter of 15 nM. Alpha-beta heterodimers associate head-to-tail to form protofilaments running lengthwise along the microtubule wall with the beta-tubulin subunit facing the microtubule plus end conferring a structural polarity. Microtubules usually have 13 protofilaments but different protofilament numbers can be found in some organisms and specialized cells. Mg(2+) is required as a cofactor.

It localises to the cytoplasm. Its subcellular location is the cytoskeleton. Tubulin is the major constituent of microtubules, a cylinder consisting of laterally associated linear protofilaments composed of alpha- and beta-tubulin heterodimers. Microtubules grow by the addition of GTP-tubulin dimers to the microtubule end, where a stabilizing cap forms. Below the cap, tubulin dimers are in GDP-bound state, owing to GTPase activity of alpha-tubulin. This Arabidopsis thaliana (Mouse-ear cress) protein is Tubulin beta-4 chain (TUBB4).